A 510-amino-acid chain; its full sequence is D-alanine--D-alanyl carrier protein ligase (510 aa).

157-158 provides a ligand contact to ATP; that stretch reads TS. Asp-202 is a D-alanine binding site. Position 297–302 (297–302) interacts with ATP; that stretch reads NTYGPT. A D-alanine-binding site is contributed by Val-306. Residues Asp-389 and Lys-498 each contribute to the ATP site. Lys-498 is a binding site for D-alanine.

The protein belongs to the ATP-dependent AMP-binding enzyme family. DltA subfamily.

Its subcellular location is the cytoplasm. It catalyses the reaction holo-[D-alanyl-carrier protein] + D-alanine + ATP = D-alanyl-[D-alanyl-carrier protein] + AMP + diphosphate. Its pathway is cell wall biogenesis; lipoteichoic acid biosynthesis. In terms of biological role, catalyzes the first step in the D-alanylation of lipoteichoic acid (LTA), the activation of D-alanine and its transfer onto the D-alanyl carrier protein (Dcp) DltC. In an ATP-dependent two-step reaction, forms a high energy D-alanyl-AMP intermediate, followed by transfer of the D-alanyl residue as a thiol ester to the phosphopantheinyl prosthetic group of the Dcp. D-alanylation of LTA plays an important role in modulating the properties of the cell wall in Gram-positive bacteria, influencing the net charge of the cell wall. The protein is D-alanine--D-alanyl carrier protein ligase of Listeria monocytogenes serotype 4b (strain CLIP80459).